Here is a 410-residue protein sequence, read N- to C-terminus: NADH-quinone oxidoreductase subunit H (410 aa).

9 consecutive transmembrane segments (helical) span residues 11–31 (LVAAKAIAVFVFLMLTVLVAI), 79–99 (FVYFVAPIISVIPAFTAFAFI), 119–139 (LPVAVLFILGLSAIGVYGIVL), 160–180 (VISYEVAMGLSFATVFLMAGT), 192–212 (GVWYAFLLLPSFVIYLISMVG), 257–277 (ALAATLFFGGWHAPWPLNMWA), 283–303 (WWPLIWFTAKVWGFLFIYFWL), 317–337 (ALGWKLLIPVSLVWVMVAAII), and 347–367 (YWTPTLVFSSIVVAAAMVLLL). The interval 376–410 (ARASARQRGDEGTSPEPAFPTPPLLAGATKENAGG) is disordered.

This sequence belongs to the complex I subunit 1 family. NDH-1 is composed of 14 different subunits. Subunits NuoA, H, J, K, L, M, N constitute the membrane sector of the complex.

The protein localises to the cell membrane. The enzyme catalyses a quinone + NADH + 5 H(+)(in) = a quinol + NAD(+) + 4 H(+)(out). NDH-1 shuttles electrons from NADH, via FMN and iron-sulfur (Fe-S) centers, to quinones in the respiratory chain. The immediate electron acceptor for the enzyme in this species is believed to be menaquinone. Couples the redox reaction to proton translocation (for every two electrons transferred, four hydrogen ions are translocated across the cytoplasmic membrane), and thus conserves the redox energy in a proton gradient. The chain is NADH-quinone oxidoreductase subunit H from Mycobacterium bovis (strain ATCC BAA-935 / AF2122/97).